We begin with the raw amino-acid sequence, 774 residues long: Lysyl oxidase homolog 2 (774 aa).

The N-terminal stretch at 1-25 (MERPLCSHLCSCLAVLALLSPLSLA) is a signal peptide. 4 SRCR domains span residues 58 to 159 (LRLA…VVCS), 188 to 302 (IRAI…VSCV), 326 to 425 (VRLR…VRCN), and 435 to 544 (LRLN…VACS). Cystine bridges form between C84–C148, C97–C158, C128–C138, C218–C291, C231–C301, C265–C275, C351–C414, C364–C424, and C395–C405. N-linked (GlcNAc...) asparagine glycosylation is present at N288. An N-linked (GlcNAc...) asparagine glycan is attached at N455. 3 cysteine pairs are disulfide-bonded: C464–C530, C477–C543, and C511–C521. Residues 548-751 (PDLVLNAEMV…WMYNCHIGGS (204 aa)) are lysyl-oxidase like. 2 residues coordinate Ca(2+): D549 and L550. 4 cysteine pairs are disulfide-bonded: C573-C625, C579-C695, C657-C673, and C663-C685. Positions 626, 628, and 630 each coordinate Cu cation. A glycan (N-linked (GlcNAc...) asparagine) is linked at N644. The lysine tyrosylquinone (Lys-Tyr) cross-link spans 653 to 689 (KASFCLEDTECEGDIQKNYECANFGDQGITMGCWDMY). At Y689 the chain carries 2',4',5'-topaquinone. E722, D724, N727, and N728 together coordinate Ca(2+). Residues C732 and C746 are joined by a disulfide bond.

Belongs to the lysyl oxidase family. As to quaternary structure, component of some chromatin repressor complex. Interacts with SNAI1. Interacts with TAF10. Interacts with HSPA5. Interacts with EFEMP2. Cu cation is required as a cofactor. Lysine tyrosylquinone residue serves as cofactor. In terms of processing, the lysine tyrosylquinone cross-link (LTQ) is generated by condensation of the epsilon-amino group of a lysine with a topaquinone produced by oxidation of tyrosine. Post-translationally, N-glycosylated. N-glycosylation on Asn-455 and Asn-644 may be essential for proper folding and secretion; may be composed of a fucosylated carbohydrates attached to a trimannose N-linked glycan core.

It localises to the secreted. It is found in the extracellular space. Its subcellular location is the extracellular matrix. The protein resides in the basement membrane. The protein localises to the nucleus. It localises to the chromosome. It is found in the endoplasmic reticulum. It catalyses the reaction L-lysyl-[protein] + O2 + H2O = (S)-2-amino-6-oxohexanoyl-[protein] + H2O2 + NH4(+). Its activity is regulated as follows. Specifically inhibited by a mouse monoclonal antibody AB0023, inhibition occurs in a non-competitive manner. Its function is as follows. Mediates the post-translational oxidative deamination of lysine residues on target proteins leading to the formation of deaminated lysine (allysine). Acts as a transcription corepressor and specifically mediates deamination of trimethylated 'Lys-4' of histone H3 (H3K4me3), a specific tag for epigenetic transcriptional activation. Shows no activity against histone H3 when it is trimethylated on 'Lys-9' (H3K9me3) or 'Lys-27' (H3K27me3) or when 'Lys-4' is monomethylated (H3K4me1) or dimethylated (H3K4me2). Also mediates deamination of methylated TAF10, a member of the transcription factor IID (TFIID) complex, which induces release of TAF10 from promoters, leading to inhibition of TFIID-dependent transcription. LOXL2-mediated deamination of TAF10 results in transcriptional repression of genes required for embryonic stem cell pluripotency including POU5F1/OCT4, NANOG, KLF4 and SOX2. Involved in epithelial to mesenchymal transition (EMT) via interaction with SNAI1 and participates in repression of E-cadherin CDH1, probably by mediating deamination of histone H3. During EMT, involved with SNAI1 in negatively regulating pericentromeric heterochromatin transcription. SNAI1 recruits LOXL2 to pericentromeric regions to oxidize histone H3 and repress transcription which leads to release of heterochromatin component CBX5/HP1A, enabling chromatin reorganization and acquisition of mesenchymal traits. Interacts with the endoplasmic reticulum protein HSPA5 which activates the IRE1-XBP1 pathway of the unfolded protein response, leading to expression of several transcription factors involved in EMT and subsequent EMT induction. When secreted into the extracellular matrix, promotes cross-linking of extracellular matrix proteins by mediating oxidative deamination of peptidyl lysine residues in precursors to fibrous collagen and elastin. Acts as a regulator of sprouting angiogenesis, probably via collagen IV scaffolding. Acts as a regulator of chondrocyte differentiation, probably by regulating expression of factors that control chondrocyte differentiation. This Pongo abelii (Sumatran orangutan) protein is Lysyl oxidase homolog 2 (LOXL2).